The primary structure comprises 291 residues: 4-diphosphocytidyl-2-C-methyl-D-erythritol kinase (291 aa).

Lys-8 is a catalytic residue. An ATP-binding site is contributed by 89-99 (PIGAGVGGGSS). Residue Asp-131 is part of the active site.

The protein belongs to the GHMP kinase family. IspE subfamily.

The catalysed reaction is 4-CDP-2-C-methyl-D-erythritol + ATP = 4-CDP-2-C-methyl-D-erythritol 2-phosphate + ADP + H(+). It participates in isoprenoid biosynthesis; isopentenyl diphosphate biosynthesis via DXP pathway; isopentenyl diphosphate from 1-deoxy-D-xylulose 5-phosphate: step 3/6. In terms of biological role, catalyzes the phosphorylation of the position 2 hydroxy group of 4-diphosphocytidyl-2C-methyl-D-erythritol. This chain is 4-diphosphocytidyl-2-C-methyl-D-erythritol kinase, found in Chlamydia caviae (strain ATCC VR-813 / DSM 19441 / 03DC25 / GPIC) (Chlamydophila caviae).